We begin with the raw amino-acid sequence, 75 residues long: uncharacterized protein (75 aa).

This is an uncharacterized protein from Homo sapiens (Human).